We begin with the raw amino-acid sequence, 445 residues long: Inositol-pentakisphosphate 2-kinase IPK1 (445 aa).

ATP contacts are provided by residues 19–22 (GAAN) and arginine 40. Residue arginine 127 participates in substrate binding. ATP-binding positions include 144-146 (SDH) and 162-164 (EIK). The short motif at 162-166 (EIKAK) is the EXKPK motif element. Substrate contacts are provided by lysine 166, lysine 196, and asparagine 234. Arginine 237 provides a ligand contact to ATP. Residues histidine 312, cysteine 322, cysteine 325, and histidine 341 each contribute to the Zn(2+) site. Aspartate 363 lines the substrate pocket. Aspartate 402 is an ATP binding site. 3 residues coordinate substrate: lysine 406, lysine 410, and tyrosine 414.

Belongs to the IPK1 type 2 family. The cofactor is Zn(2+).

It carries out the reaction 1D-myo-inositol 1,3,4,5,6-pentakisphosphate + ATP = 1D-myo-inositol hexakisphosphate + ADP + H(+). Phosphorylates Ins(1,3,4,5,6)P5 at position 2 to form Ins(1,2,3,4,5,6)P6 (InsP6 or phytate). Phytate is a regulator of intracellular signaling, a highly abundant animal antinutrient, and a phosphate store in plant seeds. Also phosphorylates Ins(1,3,4,6)P4 and Ins(1,4,5,6)P4 to produce Ins(1,2,3,4,6)P5 and Ins(1,2,4,5,6)P5. In Oryza sativa subsp. indica (Rice), this protein is Inositol-pentakisphosphate 2-kinase IPK1.